The chain runs to 353 residues: DNA replication and repair protein RecF (353 aa).

30-37 is an ATP binding site; that stretch reads GANGQGKT.

Belongs to the RecF family.

The protein resides in the cytoplasm. In terms of biological role, the RecF protein is involved in DNA metabolism; it is required for DNA replication and normal SOS inducibility. RecF binds preferentially to single-stranded, linear DNA. It also seems to bind ATP. The chain is DNA replication and repair protein RecF from Carboxydothermus hydrogenoformans (strain ATCC BAA-161 / DSM 6008 / Z-2901).